The primary structure comprises 140 residues: Nucleoside diphosphate kinase (140 aa).

Residues K11, F59, R87, T93, R104, and N114 each contribute to the ATP site. H117 serves as the catalytic Pros-phosphohistidine intermediate.

It belongs to the NDK family. Homotetramer. It depends on Mg(2+) as a cofactor.

It localises to the cytoplasm. It catalyses the reaction a 2'-deoxyribonucleoside 5'-diphosphate + ATP = a 2'-deoxyribonucleoside 5'-triphosphate + ADP. The enzyme catalyses a ribonucleoside 5'-diphosphate + ATP = a ribonucleoside 5'-triphosphate + ADP. In terms of biological role, major role in the synthesis of nucleoside triphosphates other than ATP. The ATP gamma phosphate is transferred to the NDP beta phosphate via a ping-pong mechanism, using a phosphorylated active-site intermediate. The polypeptide is Nucleoside diphosphate kinase (Rickettsia bellii (strain OSU 85-389)).